The following is a 212-amino-acid chain: MFAEFGVLNYLTYLVGAVFIILVPGPNTFFVLKTGIAHGVKKGYLAAAGVFIGDAVLMFLAFAGVATLIKTTPVLFNVVRYLGAIYLLWLGGKMLYAVLTQRDGQSDASAEPASAILKRSLTLSLTNPKAILFYVSFFVQFIDVNAKTPGVAFFILALTLEVISFCYMSFLILSGSFVTRYVKTRKKLAKLGNSLIGLVFVGFAARLATLQS.

The next 6 helical transmembrane spans lie at 5–25 (FGVLNYLTYLVGAVFIILVPG), 49–69 (GVFIGDAVLMFLAFAGVATLI), 81–101 (YLGAIYLLWLGGKMLYAVLTQ), 122–142 (TLSLTNPKAILFYVSFFVQFI), 153–173 (FFILALTLEVISFCYMSFLIL), and 188–208 (LAKLGNSLIGLVFVGFAARLA).

This sequence belongs to the Rht family.

It localises to the cell inner membrane. It carries out the reaction L-leucine(in) + H(+)(out) = L-leucine(out) + H(+)(in). Functionally, exporter of leucine. The chain is Leucine efflux protein (leuE) from Klebsiella pneumoniae subsp. pneumoniae (strain ATCC 700721 / MGH 78578).